Reading from the N-terminus, the 151-residue chain is 3-hydroxyacyl-[acyl-carrier-protein] dehydratase FabZ (151 aa).

The active site involves His-54.

It belongs to the thioester dehydratase family. FabZ subfamily.

It localises to the cytoplasm. It catalyses the reaction a (3R)-hydroxyacyl-[ACP] = a (2E)-enoyl-[ACP] + H2O. Its function is as follows. Involved in unsaturated fatty acids biosynthesis. Catalyzes the dehydration of short chain beta-hydroxyacyl-ACPs and long chain saturated and unsaturated beta-hydroxyacyl-ACPs. This is 3-hydroxyacyl-[acyl-carrier-protein] dehydratase FabZ from Blochmanniella pennsylvanica (strain BPEN).